The chain runs to 284 residues: 2-dehydro-3-deoxyphosphooctonate aldolase (284 aa).

It belongs to the KdsA family.

The protein localises to the cytoplasm. The catalysed reaction is D-arabinose 5-phosphate + phosphoenolpyruvate + H2O = 3-deoxy-alpha-D-manno-2-octulosonate-8-phosphate + phosphate. It functions in the pathway carbohydrate biosynthesis; 3-deoxy-D-manno-octulosonate biosynthesis; 3-deoxy-D-manno-octulosonate from D-ribulose 5-phosphate: step 2/3. It participates in bacterial outer membrane biogenesis; lipopolysaccharide biosynthesis. The chain is 2-dehydro-3-deoxyphosphooctonate aldolase from Paraburkholderia phymatum (strain DSM 17167 / CIP 108236 / LMG 21445 / STM815) (Burkholderia phymatum).